The following is a 452-amino-acid chain: MKVQPSVTCVASWGGIVHLEAFGDPVIVLRGAWAVPRVDCLIDTLRTPNASCMRKGTHLLVPCLEEEELALHRRRLDMSEALPCPGKETPTPGCRLGALYWACVHNDPTQLQAILDGGVSPEEATQVDSNGRTGLMVACYHGFQSVVALLSHCPFLDVNQQDKGGDTALMLAAQAGHVPLVSLLLNYYVGLDLERRDQRGLTALMKAAMRNRCADLTAVDPVRGKTALEWAVLTDSFDTVWRIRQLLRRPQVEQLSQHYKPEWPALSGLVAQAQAQAQVAPSLLERLQATLSLPFAPSPQEGGVLDHLVTATTSLASPFVTTACHTLCPDHPPSLGTRSKSVPELLGTAPPPPLVPQSPPGSPQRSPWVFVPYQSPQGILSKCLQWLQPRDSTSPRPQVPKILLSKASSSSHQCQPKPSPSGHQSLALPLWRYQELRIEKRKQEEEARMAQK.

ANK repeat units lie at residues 94–123 (CRLG…SPEE), 130–160 (NGRT…DVNQ), 164–193 (GGDT…GLDL), and 223–257 (RGKT…QLSQ). Disordered regions lie at residues 335–369 (LGTR…SPWV) and 405–427 (SKAS…QSLA). A compositionally biased stretch (pro residues) spans 349–362 (APPPPLVPQSPPGS). Over residues 406–424 (KASSSSHQCQPKPSPSGHQ) the composition is skewed to polar residues.

The protein resides in the cytoplasm. It localises to the cytosol. It is found in the nucleus. In terms of biological role, acts as a transcriptional repressor for CRX-activated photoreceptor gene regulation. This is Photoreceptor ankyrin repeat protein from Homo sapiens (Human).